Reading from the N-terminus, the 154-residue chain is 6,7-dimethyl-8-ribityllumazine synthase (154 aa).

5-amino-6-(D-ribitylamino)uracil contacts are provided by residues F22, 56–58, and 80–82; these read AFE and AVI. (2S)-2-hydroxy-3-oxobutyl phosphate is bound at residue 85 to 86; that stretch reads AT. Catalysis depends on H88, which acts as the Proton donor. F113 lines the 5-amino-6-(D-ribitylamino)uracil pocket. R127 is a (2S)-2-hydroxy-3-oxobutyl phosphate binding site.

Belongs to the DMRL synthase family.

It catalyses the reaction (2S)-2-hydroxy-3-oxobutyl phosphate + 5-amino-6-(D-ribitylamino)uracil = 6,7-dimethyl-8-(1-D-ribityl)lumazine + phosphate + 2 H2O + H(+). It functions in the pathway cofactor biosynthesis; riboflavin biosynthesis; riboflavin from 2-hydroxy-3-oxobutyl phosphate and 5-amino-6-(D-ribitylamino)uracil: step 1/2. In terms of biological role, catalyzes the formation of 6,7-dimethyl-8-ribityllumazine by condensation of 5-amino-6-(D-ribitylamino)uracil with 3,4-dihydroxy-2-butanone 4-phosphate. This is the penultimate step in the biosynthesis of riboflavin. This Syntrophobacter fumaroxidans (strain DSM 10017 / MPOB) protein is 6,7-dimethyl-8-ribityllumazine synthase.